Reading from the N-terminus, the 2327-residue chain is Acetyl-CoA carboxylase 2 (2327 aa).

The tract at residues M1 to L62 is disordered. Positions P134 to A641 constitute a Biotin carboxylation domain. The 195-residue stretch at E287 to I481 folds into the ATP-grasp domain. C313–L370 provides a ligand contact to ATP. Mg(2+) contacts are provided by E436, E450, and N452. Residues E436, E450, and N452 each coordinate Mn(2+). R454 is a catalytic residue. The 75-residue stretch at L768–D842 folds into the Biotinyl-binding domain. K809 is modified (N6-biotinyllysine). The CoA carboxyltransferase N-terminal domain occupies P1568–T1909. Residues P1568–A2227 form a carboxyltransferase region. CoA contacts are provided by R1818, K2119, and R2121. The 315-residue stretch at P1913–A2227 folds into the CoA carboxyltransferase C-terminal domain.

In terms of assembly, homodimer. It depends on biotin as a cofactor. Mg(2+) is required as a cofactor. The cofactor is Mn(2+).

It localises to the cytoplasm. It is found in the cytosol. The catalysed reaction is hydrogencarbonate + acetyl-CoA + ATP = malonyl-CoA + ADP + phosphate + H(+). The enzyme catalyses N(6)-biotinyl-L-lysyl-[protein] + hydrogencarbonate + ATP = N(6)-carboxybiotinyl-L-lysyl-[protein] + ADP + phosphate + H(+). Its pathway is lipid metabolism; malonyl-CoA biosynthesis; malonyl-CoA from acetyl-CoA: step 1/1. Multifunctional enzyme that catalyzes the carboxylation of acetyl-CoA, forming malonyl-CoA, which is used in the plastid for fatty acid synthesis and in the cytosol in various biosynthetic pathways including fatty acid elongation. In Oryza sativa subsp. japonica (Rice), this protein is Acetyl-CoA carboxylase 2 (ACC2).